We begin with the raw amino-acid sequence, 169 residues long: ATP synthase subunit b (169 aa).

Residues 14–34 (TFLAMLISFLILVFILQQVAF) form a helical membrane-spanning segment.

Belongs to the ATPase B chain family. As to quaternary structure, F-type ATPases have 2 components, F(1) - the catalytic core - and F(0) - the membrane proton channel. F(1) has five subunits: alpha(3), beta(3), gamma(1), delta(1), epsilon(1). F(0) has four main subunits: a(1), b(2) and c(10-14). The alpha and beta chains form an alternating ring which encloses part of the gamma chain. F(1) is attached to F(0) by a central stalk formed by the gamma and epsilon chains, while a peripheral stalk is formed by the delta and b chains.

Its subcellular location is the cell membrane. In terms of biological role, f(1)F(0) ATP synthase produces ATP from ADP in the presence of a proton or sodium gradient. F-type ATPases consist of two structural domains, F(1) containing the extramembraneous catalytic core and F(0) containing the membrane proton channel, linked together by a central stalk and a peripheral stalk. During catalysis, ATP synthesis in the catalytic domain of F(1) is coupled via a rotary mechanism of the central stalk subunits to proton translocation. Its function is as follows. Component of the F(0) channel, it forms part of the peripheral stalk, linking F(1) to F(0). The sequence is that of ATP synthase subunit b from Heliobacterium modesticaldum (strain ATCC 51547 / Ice1).